Consider the following 161-residue polypeptide: MTTTLERGFSEEQEALVVKSWNVMKKNSGELGLKFFLKIFEIAPSAQKLFSFLRDSTVPLEQNPKLKPHAVSVFVMTCDSAVQLRKAGKVTVRESNLKKLGATHFRTGVANEHFEVTKFALLETIKEAVPEMWSPAMKNAWGEAYDQLVDAIKSEMKPPSS.

In terms of domain architecture, Globin spans 8–157; it reads GFSEEQEALV…LVDAIKSEMK (150 aa). The Homodimerization motif lies at 41-45; sequence EIAPS. Ser-51, Lys-65, His-69, Lys-99, Thr-103, and His-104 together coordinate heme b. Positions 111-123 match the Homodimerization motif; sequence NEHFEVTKFALLE.

The protein belongs to the plant globin family. As to quaternary structure, homodimer. It depends on heme b as a cofactor. Predominantly expressed in roots, cotyledons, stems and nodules (confined to some cells associated with the nitrogen-fixing Bradyrhizobium symbiont), and, to a lower extent, in flowers, young leaves, pods and seeds.

The protein localises to the cytoplasm. It localises to the nucleus. It carries out the reaction Fe(III)-heme b-[protein] + nitric oxide + H2O = Fe(II)-heme b-[protein] + nitrite + 2 H(+). Its function is as follows. Phytoglobin that reduces nitrite to nitric oxide (NO) under anoxic conditions (e.g. during flooding or in waterlogged soil) and upon root nodulation. Required for general plant development and during nodulation, especially for the onset of symbiosis. Monitors nitric oxide (NO) levels during early phase of the nitrogen-fixing symbiosis and buffers oxygen in functioning nodules. May not function as an oxygen storage or transport protein. Has an unusually high affinity for O(2) through a hexacoordinate heme iron because of a very low dissociation constant. Involved in water stress tolerance. The protein is Anaerobic nitrite reductase Hb2 of Glycine max (Soybean).